A 612-amino-acid polypeptide reads, in one-letter code: Zinc metalloproteinase-disintegrin-like 2a (612 aa).

Positions 1 to 20 (MIQVLLVTICLAVFPYQGSS) are cleaved as a signal peptide. Residues 21 to 189 (IILGSGNVND…KKASQLNLTP (169 aa)) constitute a propeptide that is removed on maturation. In terms of domain architecture, Peptidase M12B spans 199–395 (KYIELVIVAD…NRPPCILNKP (197 aa)). Ca(2+) is bound at residue E202. N218 is a glycosylation site (N-linked (GlcNAc...) asparagine). D286 provides a ligand contact to Ca(2+). 3 cysteine pairs are disulfide-bonded: C310/C390, C350/C374, and C352/C357. Residue H335 participates in Zn(2+) binding. The active site involves E336. H339 and H345 together coordinate Zn(2+). Ca(2+) is bound by residues C390, N393, V405, N408, F410, E412, E415, and D418. The Disintegrin domain occupies 403 to 489 (PPVCGNYFVE…DCPTDNFQRN (87 aa)). 14 cysteine pairs are disulfide-bonded: C406/C435, C417/C430, C419/C425, C429/C452, C443/C449, C448/C474, C461/C481, C468/C500, C493/C505, C512/C562, C527/C573, C540/C550, C557/C599, and C593/C605. The short motif at 467 to 469 (ECD) is the D/ECD-tripeptide element.

It belongs to the venom metalloproteinase (M12B) family. P-III subfamily. It depends on Zn(2+) as a cofactor. Expressed by the venom gland.

The protein resides in the secreted. Its function is as follows. Snake venom metalloproteinase that impairs hemostasis in the envenomed animal. This Crotalus adamanteus (Eastern diamondback rattlesnake) protein is Zinc metalloproteinase-disintegrin-like 2a.